The primary structure comprises 25 residues: Putative cytochrome c4 (25 aa).

Residues 1–25 (QEDIEAGKQKSATCTACHGQEGNST) are disordered. Residues Cys-14 and Cys-17 each coordinate heme.

Post-translationally, binds 2 heme groups per subunit.

It localises to the periplasm. In terms of biological role, diheme, high potential cytochrome c believed to be an intermediate electron donor to terminal oxidation systems. The polypeptide is Putative cytochrome c4 (Aliivibrio fischeri (Vibrio fischeri)).